We begin with the raw amino-acid sequence, 196 residues long: Elongation factor Ts (196 aa).

Residues 80–83 (TDFV) are involved in Mg(2+) ion dislocation from EF-Tu.

It belongs to the EF-Ts family.

The protein resides in the cytoplasm. Its function is as follows. Associates with the EF-Tu.GDP complex and induces the exchange of GDP to GTP. It remains bound to the aminoacyl-tRNA.EF-Tu.GTP complex up to the GTP hydrolysis stage on the ribosome. This chain is Elongation factor Ts, found in Thermus thermophilus (strain ATCC BAA-163 / DSM 7039 / HB27).